The sequence spans 185 residues: Ribosome-recycling factor (185 aa).

The protein belongs to the RRF family.

The protein localises to the cytoplasm. Its function is as follows. Responsible for the release of ribosomes from messenger RNA at the termination of protein biosynthesis. May increase the efficiency of translation by recycling ribosomes from one round of translation to another. The polypeptide is Ribosome-recycling factor (Photobacterium profundum (strain SS9)).